The following is a 405-amino-acid chain: Tryptophan synthase beta chain (405 aa).

An N6-(pyridoxal phosphate)lysine modification is found at K98.

This sequence belongs to the TrpB family. Tetramer of two alpha and two beta chains. Requires pyridoxal 5'-phosphate as cofactor.

The catalysed reaction is (1S,2R)-1-C-(indol-3-yl)glycerol 3-phosphate + L-serine = D-glyceraldehyde 3-phosphate + L-tryptophan + H2O. Its pathway is amino-acid biosynthesis; L-tryptophan biosynthesis; L-tryptophan from chorismate: step 5/5. Functionally, the beta subunit is responsible for the synthesis of L-tryptophan from indole and L-serine. This is Tryptophan synthase beta chain from Methylococcus capsulatus (strain ATCC 33009 / NCIMB 11132 / Bath).